Here is a 333-residue protein sequence, read N- to C-terminus: Acetyl-coenzyme A carboxylase carboxyl transferase subunit alpha (333 aa).

Residues 48 to 308 (ALEVKVETLR…KEMLIEELRI (261 aa)) form the CoA carboxyltransferase C-terminal domain.

It belongs to the AccA family. As to quaternary structure, acetyl-CoA carboxylase is a heterohexamer composed of biotin carboxyl carrier protein (AccB), biotin carboxylase (AccC) and two subunits each of ACCase subunit alpha (AccA) and ACCase subunit beta (AccD).

The protein resides in the cytoplasm. The catalysed reaction is N(6)-carboxybiotinyl-L-lysyl-[protein] + acetyl-CoA = N(6)-biotinyl-L-lysyl-[protein] + malonyl-CoA. The protein operates within lipid metabolism; malonyl-CoA biosynthesis; malonyl-CoA from acetyl-CoA: step 1/1. Component of the acetyl coenzyme A carboxylase (ACC) complex. First, biotin carboxylase catalyzes the carboxylation of biotin on its carrier protein (BCCP) and then the CO(2) group is transferred by the carboxyltransferase to acetyl-CoA to form malonyl-CoA. This is Acetyl-coenzyme A carboxylase carboxyl transferase subunit alpha from Chlorobium phaeobacteroides (strain DSM 266 / SMG 266 / 2430).